A 337-amino-acid chain; its full sequence is Bifunctional methylenetetrahydrofolate dehydrogenase/cyclohydrolase, mitochondrial (337 aa).

The transit peptide at 1–30 (MATALCPLRALGQTAFRPRTRRLHLSAPRA) directs the protein to the mitochondrion. Substrate-binding positions include 79-83 (YVLNK) and 126-128 (VQL). NAD(+) contacts are provided by residues 195-197 (GRS) and R228. Residue 304–308 (PGGVG) participates in substrate binding.

It belongs to the tetrahydrofolate dehydrogenase/cyclohydrolase family. Requires Mg(2+) as cofactor.

The protein localises to the mitochondrion. The catalysed reaction is (6R)-5,10-methylene-5,6,7,8-tetrahydrofolate + NAD(+) = (6R)-5,10-methenyltetrahydrofolate + NADH. It catalyses the reaction (6R)-5,10-methenyltetrahydrofolate + H2O = (6R)-10-formyltetrahydrofolate + H(+). Functionally, although its dehydrogenase activity is NAD-specific, it can also utilize NADP at a reduced efficiency. The sequence is that of Bifunctional methylenetetrahydrofolate dehydrogenase/cyclohydrolase, mitochondrial (MTHFD2) from Gallus gallus (Chicken).